We begin with the raw amino-acid sequence, 382 residues long: Na(+)/H(+) antiporter NhaA 2 (382 aa).

10 helical membrane passes run 11–31, 45–65, 91–111, 116–136, 145–165, 171–191, 197–214, 287–307, 324–344, and 353–373; these read FSVPLVAGVVVALFWANLDPA, LSFHFISNELFMTLFFGIAAV, LGGVLGPVLVYLGLNALVGLP, GWGIPTATDIALAWLAARMVF, YLLLLAVADDAIGLAIIALFY, PVVAAWLLLTLLGMLVAWGLG, SYWPYILLGGSLSWIGLH, WLVLVSLLVGKTVGIFGFGLL, LLVAGVVAGTGFTVALFVSGS, and AAAKMGAMFSLAAALIGMLLG.

The protein belongs to the NhaA Na(+)/H(+) (TC 2.A.33) antiporter family.

The protein localises to the cell inner membrane. It carries out the reaction Na(+)(in) + 2 H(+)(out) = Na(+)(out) + 2 H(+)(in). In terms of biological role, na(+)/H(+) antiporter that extrudes sodium in exchange for external protons. The chain is Na(+)/H(+) antiporter NhaA 2 from Pelobacter propionicus (strain DSM 2379 / NBRC 103807 / OttBd1).